Reading from the N-terminus, the 190-residue chain is Peptidyl-tRNA hydrolase (190 aa).

Tyrosine 14 is a tRNA binding site. Residue histidine 19 is the Proton acceptor of the active site. 3 residues coordinate tRNA: tyrosine 64, asparagine 66, and asparagine 112.

Belongs to the PTH family. In terms of assembly, monomer.

It localises to the cytoplasm. It carries out the reaction an N-acyl-L-alpha-aminoacyl-tRNA + H2O = an N-acyl-L-amino acid + a tRNA + H(+). Its function is as follows. Hydrolyzes ribosome-free peptidyl-tRNAs (with 1 or more amino acids incorporated), which drop off the ribosome during protein synthesis, or as a result of ribosome stalling. Functionally, catalyzes the release of premature peptidyl moieties from peptidyl-tRNA molecules trapped in stalled 50S ribosomal subunits, and thus maintains levels of free tRNAs and 50S ribosomes. The chain is Peptidyl-tRNA hydrolase from Chlorobium luteolum (strain DSM 273 / BCRC 81028 / 2530) (Pelodictyon luteolum).